A 496-amino-acid polypeptide reads, in one-letter code: MAGFSLYCFKNPRILFTLPSESPLFVLGSDKCSPATRRPSRKTRGFVVTYAHSNPKIINPKKKSRYGQTLSPYDSDEDDDDDDDDDDDDWLLNDDFAEVTEYEKKKPKSHKQTIAKKSVKKGIVKPEESETDEDDLDLGISPNATSEKKKESWRLDGRGKMSSRKYVEKLYPRLAEEIDIDPKCVPLLDYLSTFGLKESHFVQMYERHMPSLQINVFSAQERLDYLLSVGVKHRDIKRMLLRQPQILQYTVENNLKAHISFLMGLGIPNSKIGQIVAATPSLFSYSVENSLRPTIRYLIEEVGIKETDVGKVVQLSPQILVQRLDITWNTRYMFLSKELGAPRDSVVKMVKKHPQLLHYSIDDGFLPRINFLRSIGMCNSDILKVLTSLTQVLSLSLEDNLKPKYMYLVNELNNEVHILTKYPMYLSLSLDQRIRPRHRFLVELKKVRKGPFPLSSLVPNDESFCQQWAGTSVDTYLAFRQRLLLKEFANKYDKRG.

The N-terminal 44 residues, 1–44, are a transit peptide targeting the chloroplast; that stretch reads MAGFSLYCFKNPRILFTLPSESPLFVLGSDKCSPATRRPSRKTR. Disordered regions lie at residues 57–90 and 102–155; these read IINP…DDDW and YEKK…SWRL. Residues 74-90 show a composition bias toward acidic residues; the sequence is DSDEDDDDDDDDDDDDW. A compositionally biased stretch (basic residues) spans 105 to 123; sequence KKPKSHKQTIAKKSVKKGI. Residues 146-155 show a composition bias toward basic and acidic residues; the sequence is SEKKKESWRL.

It belongs to the mTERF family.

The protein localises to the plastid. Its subcellular location is the chloroplast. Functionally, transcription termination factor required for processing and steady-state levels of plastid transcripts. May play a role in response to abiotic stresses. The chain is Transcription termination factor MTERF9, chloroplastic from Arabidopsis thaliana (Mouse-ear cress).